We begin with the raw amino-acid sequence, 227 residues long: MDLQRIYDRRKSRLVDELAIAKYGMLGLMLMENAGRNVAYELLARTPCRRVVIVVGKGNNGGDGWVIARHLDAAGVDVIVLLTTAPNEFRGDAAVNYAIANLAKIKIIDLSRTPTAEAIATHFAEADWLVDAMLGTGATGEPRGAMRLAIEAINQSSVRTLAVDLPTGIDCDSGGAATVAVRADVTCTFVTLKPCCQVAACRSYLGEVRVIDIGVPRALLEEIDAMP.

The 210-residue stretch at 12-221 (SRLVDELAIA…DIGVPRALLE (210 aa)) folds into the YjeF N-terminal domain. Residue 59 to 63 (NNGGD) participates in (6S)-NADPHX binding. Residues asparagine 60 and aspartate 131 each contribute to the K(+) site. Residues 135–141 (GTGATGE) and aspartate 164 each bind (6S)-NADPHX. Threonine 167 contacts K(+).

It belongs to the NnrE/AIBP family. K(+) serves as cofactor.

The enzyme catalyses (6R)-NADHX = (6S)-NADHX. It catalyses the reaction (6R)-NADPHX = (6S)-NADPHX. Functionally, catalyzes the epimerization of the S- and R-forms of NAD(P)HX, a damaged form of NAD(P)H that is a result of enzymatic or heat-dependent hydration. This is a prerequisite for the S-specific NAD(P)H-hydrate dehydratase to allow the repair of both epimers of NAD(P)HX. The sequence is that of NAD(P)H-hydrate epimerase from Pirellula staleyi (strain ATCC 27377 / DSM 6068 / ICPB 4128) (Pirella staleyi).